The chain runs to 451 residues: 3-phosphoshikimate 1-carboxyvinyltransferase (451 aa).

3-phosphoshikimate-binding residues include Lys-28, Ser-29, and Arg-33. Lys-28 serves as a coordination point for phosphoenolpyruvate. Positions 105 and 133 each coordinate phosphoenolpyruvate. 3-phosphoshikimate is bound by residues Ser-178, Gln-180, Asp-331, and Lys-358. Gln-180 contributes to the phosphoenolpyruvate binding site. The Proton acceptor role is filled by Asp-331. Phosphoenolpyruvate contacts are provided by Arg-362 and Arg-406.

Belongs to the EPSP synthase family. As to quaternary structure, monomer.

The protein resides in the cytoplasm. It carries out the reaction 3-phosphoshikimate + phosphoenolpyruvate = 5-O-(1-carboxyvinyl)-3-phosphoshikimate + phosphate. It participates in metabolic intermediate biosynthesis; chorismate biosynthesis; chorismate from D-erythrose 4-phosphate and phosphoenolpyruvate: step 6/7. Its function is as follows. Catalyzes the transfer of the enolpyruvyl moiety of phosphoenolpyruvate (PEP) to the 5-hydroxyl of shikimate-3-phosphate (S3P) to produce enolpyruvyl shikimate-3-phosphate and inorganic phosphate. The chain is 3-phosphoshikimate 1-carboxyvinyltransferase from Rhodospirillum rubrum (strain ATCC 11170 / ATH 1.1.1 / DSM 467 / LMG 4362 / NCIMB 8255 / S1).